We begin with the raw amino-acid sequence, 1530 residues long: Coiled-coil domain-containing protein 141 (1530 aa).

T91 bears the Phosphothreonine mark. 3 coiled-coil regions span residues 642–706 (VKNE…EALM), 758–783 (VKEK…QDYE), and 861–970 (SNVS…KTSD). A disordered region spans residues 1210–1241 (SPDDISLPPLPGSPESPLAPSDMEVEEPVSSS). In terms of domain architecture, Ig-like spans 1409 to 1530 (PNFSRLLSNV…VSLMYWLLTQ (122 aa)).

In terms of assembly, interacts with DISC1. Interacts preferentially with phosphorylated forms of myosin regulatory light chain (MRLC). Interacts (via the N-terminal region) with HDAC6; inhibits the deacetylase activity of HDAC6. Interacts with KIBRA (via the C-terminal region); retains AMPAR in the cytosol after internalization. Post-translationally, ubiquitinated and degradated by the CDC20-APC/C pathway. During brain development, CDC20-APC/C complex degrades CCDC141 after centrosome translocation into the dilated area. CCDC141 is restabilized in the dilation until the centrosome enters the dilation, at which point it is once again immediately destabilized by CDC20-APC/C complex. The oscillatory regulation of CCDC141 protein is needed for proper cortical migration. In terms of processing, phosphorylation at Thr-91 by PLK1 affects CCDC141 degradation.

Its subcellular location is the cytoplasm. The protein resides in the cytoskeleton. The protein localises to the microtubule organizing center. It is found in the centrosome. Its function is as follows. Plays a critical role in cortical radial and GnRH neurons migration during brain development. Regulates cortical radial migration by negatively controlling the activity of histone deacetylase 6 (HDAC6) and promotes centrosome maturation. CAMDI is required for dilation formation of cortical neurons during radial migration. Plays a critical role in learning and memory performance through regulation of AMPA-selective glutamate receptors (AMPARs) cell surface expression in competition with KIBRA. This Homo sapiens (Human) protein is Coiled-coil domain-containing protein 141 (CCDC141).